Reading from the N-terminus, the 173-residue chain is Alpha-crystallin A chain (173 aa).

At M1 the chain carries N-acetylmethionine. The tract at residues 1–63 is required for complex formation with BFSP1 and BFSP2; that stretch reads MDVTIQHPWF…RTVLDSGVSE (63 aa). Q6 is subject to Deamidated glutamine; partial. Residue S45 is modified to Phosphoserine. At Q50 the chain carries Deamidated glutamine; partial. One can recognise a sHSP domain in the interval 52-162; sequence LFRTVLDSGV…GHSERAIPVS (111 aa). K70 carries the post-translational modification N6-acetyllysine. Q90 carries the post-translational modification Deamidated glutamine; partial. K99 is modified (N6-acetyllysine). H100 is a binding site for Zn(2+). At N101 the chain carries Deamidated asparagine; partial. E102 and H107 together coordinate Zn(2+). Residue S122 is modified to Phosphoserine. Deamidated asparagine; partial is present on N123. The segment at 145 to 173 is disordered; it reads KVQSGLDAGHSERAIPVSREEKPSSAPSS. Q147 bears the Deamidated glutamine; partial mark. Over residues 153-167 the composition is skewed to basic and acidic residues; sequence GHSERAIPVSREEKP. Zn(2+) is bound at residue H154. S162 carries an O-linked (GlcNAc) serine glycan.

This sequence belongs to the small heat shock protein (HSP20) family. In terms of assembly, heteromer composed of three CRYAA and one CRYAB subunits. Inter-subunit bridging via zinc ions enhances stability, which is crucial as there is no protein turn over in the lens. Can also form homodimers and homotetramers (dimers of dimers) which serve as the building blocks of homooligomers. Within homooligomers, the zinc-binding motif is created from residues of 3 different molecules. His-100 and Glu-102 from one molecule are ligands of the zinc ion, and His-107 and His-154 residues from additional molecules complete the site with tetrahedral coordination geometry. Part of a complex required for lens intermediate filament formation composed of BFSP1, BFSP2 and CRYAA. In terms of processing, acetylation at Lys-70 may increase chaperone activity. Undergoes age-dependent proteolytical cleavage at the C-terminus.

It localises to the cytoplasm. Its subcellular location is the nucleus. Functionally, contributes to the transparency and refractive index of the lens. Acts as a chaperone, preventing aggregation of various proteins under a wide range of stress conditions. Required for the correct formation of lens intermediate filaments as part of a complex composed of BFSP1, BFSP2 and CRYAA. This is Alpha-crystallin A chain (CRYAA) from Eulemur fulvus fulvus (Brown lemur).